A 270-amino-acid chain; its full sequence is MANSTAELEELLMQRSLTDPQLQAAAAAAADFRILPDATVIKIGGQSVIDRGRAAVYPLVDEIVAARKNHKLLIGTGAGTRARHLYSIAAGLGLPAGVLAQLGSSVADQNAAMLGQLLAKHGIPVVGGAGLSAVPLSLAEVNAVVFSGMPPYKLWMRPAAEGVIPPYRTDAGCFLLAEQFGCKQMIFVKDEDGLYTANPKTSKDATFIPRISVDEMKAKGLHDSILEFPVLDLLQSAQHVREVQVVNGLVPGNLTRALAGEHVGTIITAS.

In terms of assembly, octamer consisting of 4 alpha and 4 beta chains.

It localises to the cytoplasm. In terms of biological role, intracellular storage of molybdenum. Binds polyoxomolybdates. Can bind at least 90 molybdenum atoms per protein molecule. The chain is Molybdenum storage protein subunit beta from Azotobacter vinelandii (strain DJ / ATCC BAA-1303).